A 467-amino-acid chain; its full sequence is Protein indeterminate-domain 6, chloroplastic (467 aa).

The N-terminal 20 residues, 1–20, are a transit peptide targeting the chloroplast; the sequence is MSSSYNTIALSSTPTFLLSS. Positions 38–65 are disordered; the sequence is TMVQQQPTSSVAPPPKKRRNQPGNPNPD. Residues 39-48 show a composition bias toward polar residues; it reads MVQQQPTSSV. Ser-72 is modified (phosphoserine). C2H2-type zinc fingers lie at residues 82–104 and 123–153; these read FLCE…RRGH and YLCP…YRKH. A C2H2-type 2; degenerate zinc finger spans residues 158–181; it reads WKCDKCSKRYAVQSDWKAHSKTCG. Zn(2+) is bound by residues Cys-160, Cys-163, His-176, Cys-180, Cys-187, Cys-189, His-202, and Cys-206. The segment at 185–208 adopts a CCHC-type 2; atypical zinc-finger fold; that stretch reads YRCDCGTIFSRRDSYITHRAFCDA. The SHR-binding stretch occupies residues 195–207; sequence RRDSYITHRAFCD. Positions 440-467 are disordered; that stretch reads NGRGGRSGGPPLDAEMKFSHPNHPYGKA.

Its subcellular location is the plastid. It is found in the chloroplast. Probable transcription factor. The chain is Protein indeterminate-domain 6, chloroplastic from Arabidopsis thaliana (Mouse-ear cress).